The primary structure comprises 340 residues: Putative inactive cytochrome P450 family member 4Z2 (340 aa).

The Cytoplasmic portion of the chain corresponds to 1 to 9 (MEPSWLQEL). The chain crosses the membrane as a helical; Signal-anchor for type II membrane protein span at residues 10 to 30 (MAHPFLLLILLCMSLLLFQVI). At 31-340 (RLYQRRRWTI…AKYPEHQQRC (310 aa)) the chain is on the lumenal side.

Belongs to the cytochrome P450 family. Heme serves as cofactor. As to expression, detected at low levels in mammary gland and mammary carcinoma.

The protein localises to the membrane. This is Putative inactive cytochrome P450 family member 4Z2 (CYP4Z2P) from Homo sapiens (Human).